The chain runs to 71 residues: Sodium channel neurotoxin MeuNaTxalpha-12 (71 aa).

A signal peptide spans 1-6 (MTGVES). Positions 8–70 (RDAYIAQGNN…VPIRIQGKCQ (63 aa)) constitute an LCN-type CS-alpha/beta domain. 4 disulfide bridges follow: cysteine 18-cysteine 69, cysteine 22-cysteine 42, cysteine 28-cysteine 52, and cysteine 32-cysteine 54. Residue arginine 71 is a propeptide, removed by a carboxypeptidase.

Belongs to the long (4 C-C) scorpion toxin superfamily. Sodium channel inhibitor family. Alpha subfamily. In terms of tissue distribution, expressed by the venom gland.

Its subcellular location is the secreted. Functionally, alpha toxins bind voltage-independently at site-3 of sodium channels (Nav) and inhibit the inactivation of the activated channels, thereby blocking neuronal transmission. The polypeptide is Sodium channel neurotoxin MeuNaTxalpha-12 (Mesobuthus eupeus (Lesser Asian scorpion)).